A 195-amino-acid chain; its full sequence is Nucleoside triphosphate pyrophosphatase (195 aa).

The active-site Proton acceptor is the D70.

This sequence belongs to the Maf family. It depends on a divalent metal cation as a cofactor.

Its subcellular location is the cytoplasm. It catalyses the reaction a ribonucleoside 5'-triphosphate + H2O = a ribonucleoside 5'-phosphate + diphosphate + H(+). The enzyme catalyses a 2'-deoxyribonucleoside 5'-triphosphate + H2O = a 2'-deoxyribonucleoside 5'-phosphate + diphosphate + H(+). In terms of biological role, nucleoside triphosphate pyrophosphatase. May have a dual role in cell division arrest and in preventing the incorporation of modified nucleotides into cellular nucleic acids. The chain is Nucleoside triphosphate pyrophosphatase from Cyanothece sp. (strain PCC 7425 / ATCC 29141).